The primary structure comprises 316 residues: Glutathione synthetase (316 aa).

The region spanning 125-310 (KLFTAWFSDL…ITGMLMDAIE (186 aa)) is the ATP-grasp domain. Residue 151–207 (WEKHSDIILKPLDGMGGASIFRVKEGDPNLGVIAETLTEHGTCYCMAQNYLPAIKDG) participates in ATP binding. Mg(2+)-binding residues include Glu-281 and Asn-283.

Belongs to the prokaryotic GSH synthase family. It depends on Mg(2+) as a cofactor. The cofactor is Mn(2+).

The catalysed reaction is gamma-L-glutamyl-L-cysteine + glycine + ATP = glutathione + ADP + phosphate + H(+). It participates in sulfur metabolism; glutathione biosynthesis; glutathione from L-cysteine and L-glutamate: step 2/2. The chain is Glutathione synthetase from Shigella flexneri.